The sequence spans 174 residues: Shikimate kinase 2 (174 aa).

12-17 lines the ATP pocket; the sequence is GAGKTT. 2 residues coordinate Mg(2+): threonine 16 and aspartate 32. Aspartate 34, arginine 58, and glycine 79 together coordinate substrate. The interval 112–126 is LID domain; that stretch reads AEDPEDAQRPSLTGK. ATP is bound at residue arginine 120. Arginine 139 serves as a coordination point for substrate. Glutamine 155 is a binding site for ATP.

Belongs to the shikimate kinase family. AroL subfamily. As to quaternary structure, monomer. Mg(2+) serves as cofactor.

It localises to the cytoplasm. It carries out the reaction shikimate + ATP = 3-phosphoshikimate + ADP + H(+). It functions in the pathway metabolic intermediate biosynthesis; chorismate biosynthesis; chorismate from D-erythrose 4-phosphate and phosphoenolpyruvate: step 5/7. Functionally, catalyzes the specific phosphorylation of the 3-hydroxyl group of shikimic acid using ATP as a cosubstrate. In Yersinia enterocolitica serotype O:8 / biotype 1B (strain NCTC 13174 / 8081), this protein is Shikimate kinase 2.